Reading from the N-terminus, the 562-residue chain is 2-hydroxyisobutanoyl-CoA mutase large subunit (562 aa).

(3S)-3-hydroxybutanoyl-CoA contacts are provided by residues 76–79 (YPTM), 86–88 (TMR), Asp-117, 196–198 (TVQ), Arg-235, Asn-240, His-245, and Arg-284.

The protein belongs to the acyl-CoA mutase large subunit family. Homotetramer composed of two large substrate-binding subunits (HcmA) and two small cobalamin-binding subunits (HcmB).

It catalyses the reaction 2-hydroxyisobutanoyl-CoA = (3S)-3-hydroxybutanoyl-CoA. Together with HcmB, catalyzes the isomerization of 2-hydroxyisobutyryl-CoA and 3-hydroxybutyryl-CoA. Is specific for 2-hydroxyisobutyryl-CoA and (S)-3-hydroxybutyryl-CoA, and shows only very low activity with (R)-3-hydroxybutyryl-CoA, isobutyryl-CoA and butyryl-CoA. In vitro, can isomerize pivalyl-CoA and isovaleryl-CoA, with much lower efficiency. Plays a central role in the degradation of substrates bearing a tert-butyl moiety, such as the fuel oxygenate methyl tert-butyl ether (MTBE) and its metabolites. The protein is 2-hydroxyisobutanoyl-CoA mutase large subunit of Aquincola tertiaricarbonis.